Reading from the N-terminus, the 272-residue chain is uncharacterized protein (272 aa).

An AB hydrolase-1 domain is found at 20–133 (PVLIFIPGAN…PPINTFLPDS (114 aa)).

The protein belongs to the AB hydrolase superfamily.

This is an uncharacterized protein from Staphylococcus aureus (strain MSSA476).